We begin with the raw amino-acid sequence, 597 residues long: Hydrogenase-1 large chain (597 aa).

Residues Cys-76, Cys-79, Cys-576, and Cys-579 each contribute to the Ni(2+) site.

The protein belongs to the [NiFe]/[NiFeSe] hydrogenase large subunit family. In terms of assembly, heterodimer of a large and a small subunit. The cofactor is Ni(2+).

Its subcellular location is the cell membrane. It carries out the reaction H2 + A = AH2. The chain is Hydrogenase-1 large chain (hyaB) from Citrobacter freundii.